Consider the following 247-residue polypeptide: 1-(5-phosphoribosyl)-5-[(5-phosphoribosylamino)methylideneamino] imidazole-4-carboxamide isomerase 1 (247 aa).

The active-site Proton acceptor is Glu8. Residue Asp128 is the Proton donor of the active site.

The protein belongs to the HisA/HisF family.

The protein resides in the cytoplasm. The catalysed reaction is 1-(5-phospho-beta-D-ribosyl)-5-[(5-phospho-beta-D-ribosylamino)methylideneamino]imidazole-4-carboxamide = 5-[(5-phospho-1-deoxy-D-ribulos-1-ylimino)methylamino]-1-(5-phospho-beta-D-ribosyl)imidazole-4-carboxamide. It functions in the pathway amino-acid biosynthesis; L-histidine biosynthesis; L-histidine from 5-phospho-alpha-D-ribose 1-diphosphate: step 4/9. This chain is 1-(5-phosphoribosyl)-5-[(5-phosphoribosylamino)methylideneamino] imidazole-4-carboxamide isomerase 1, found in Ruegeria sp. (strain TM1040) (Silicibacter sp.).